We begin with the raw amino-acid sequence, 884 residues long: Alanine--tRNA ligase (884 aa).

Zn(2+) is bound by residues His572, His576, Cys673, and His677.

The protein belongs to the class-II aminoacyl-tRNA synthetase family. Zn(2+) serves as cofactor.

The protein localises to the cytoplasm. It carries out the reaction tRNA(Ala) + L-alanine + ATP = L-alanyl-tRNA(Ala) + AMP + diphosphate. Catalyzes the attachment of alanine to tRNA(Ala) in a two-step reaction: alanine is first activated by ATP to form Ala-AMP and then transferred to the acceptor end of tRNA(Ala). Also edits incorrectly charged Ser-tRNA(Ala) and Gly-tRNA(Ala) via its editing domain. The protein is Alanine--tRNA ligase of Xylella fastidiosa (strain M23).